The sequence spans 194 residues: Large ribosomal subunit protein bL17 (194 aa).

The tract at residues 126–194 is disordered; that stretch reads AEPKQTKART…SPEQTNKQEE (69 aa). Positions 131 to 140 are enriched in basic residues; it reads TKARTRRGKG. Polar residues-rich tracts occupy residues 144–161 and 181–194; these read ATTT…QDMA and LDTQ…KQEE.

Belongs to the bacterial ribosomal protein bL17 family. As to quaternary structure, part of the 50S ribosomal subunit. Contacts protein L32.

The polypeptide is Large ribosomal subunit protein bL17 (Amoebophilus asiaticus (strain 5a2)).